A 444-amino-acid chain; its full sequence is Sensor protein CiaH (444 aa).

Helical transmembrane passes span 21–41 and 183–203; these read FGVF…VMHS and LIVV…LYLA. The 216-residue stretch at 223–438 folds into the Histidine kinase domain; sequence NASHELRTPL…IFEVKIAIQT (216 aa). Position 226 is a phosphohistidine; by autocatalysis (His-226).

The protein resides in the cell membrane. It carries out the reaction ATP + protein L-histidine = ADP + protein N-phospho-L-histidine.. In terms of biological role, member of the two-component regulatory system CiaH/CiaR. Involved in early steps of competence regulation and in penicillin susceptibility. Probably phosphorylates CiaR. This is Sensor protein CiaH (ciaH) from Streptococcus pneumoniae serotype 4 (strain ATCC BAA-334 / TIGR4).